A 229-amino-acid polypeptide reads, in one-letter code: MGRFVRRLLRNLLLALFLVLVAGPVVAVILYRFIPPPVTPLMVIRAVEGRGLDHRWRPMDKISPALPRVLIAAEDAKFCEHRGFDFEALQKAYENNESGRKIRGGSTISQQTAKNVFLWPGRSYVRKGLEAWFTVLIETFWGKKRIMEVYMNSIEYGSGIYGAEAAAQRYFGVSAAKLTQAQSARLAAILPSPLKWKVIKPGKYVAKRTKKIGKATGAVRRDGLADCVA.

Residues 11-31 (NLLLALFLVLVAGPVVAVILY) form a helical membrane-spanning segment.

The protein belongs to the glycosyltransferase 51 family.

It is found in the cell inner membrane. It catalyses the reaction [GlcNAc-(1-&gt;4)-Mur2Ac(oyl-L-Ala-gamma-D-Glu-L-Lys-D-Ala-D-Ala)](n)-di-trans,octa-cis-undecaprenyl diphosphate + beta-D-GlcNAc-(1-&gt;4)-Mur2Ac(oyl-L-Ala-gamma-D-Glu-L-Lys-D-Ala-D-Ala)-di-trans,octa-cis-undecaprenyl diphosphate = [GlcNAc-(1-&gt;4)-Mur2Ac(oyl-L-Ala-gamma-D-Glu-L-Lys-D-Ala-D-Ala)](n+1)-di-trans,octa-cis-undecaprenyl diphosphate + di-trans,octa-cis-undecaprenyl diphosphate + H(+). It functions in the pathway cell wall biogenesis; peptidoglycan biosynthesis. In terms of biological role, peptidoglycan polymerase that catalyzes glycan chain elongation from lipid-linked precursors. This Caulobacter vibrioides (strain ATCC 19089 / CIP 103742 / CB 15) (Caulobacter crescentus) protein is Biosynthetic peptidoglycan transglycosylase.